A 587-amino-acid chain; its full sequence is Pyruvate decarboxylase 3 (587 aa).

Positions 48 and 135 each coordinate substrate. A thiamine pyrophosphate binding region spans residues 415-496; the sequence is DSWFNCQKLR…FLINNGGYTI (82 aa). Mg(2+) is bound by residues D464, N491, and G493. Residue E497 coordinates substrate.

The protein belongs to the TPP enzyme family. In terms of assembly, homotetramer. A metal cation serves as cofactor. The cofactor is thiamine diphosphate.

It catalyses the reaction a 2-oxocarboxylate + H(+) = an aldehyde + CO2. This chain is Pyruvate decarboxylase 3 (PDC3), found in Oryza sativa subsp. japonica (Rice).